The chain runs to 195 residues: MAGMRRLELSEALHLGPGWRHACHALLYAPDPGLLFGRIPLRYAVLMQMRFDGRLGFPGGFVDLRDGSLEDGLNRELGEELGEAAGAFRVERADYRSSHAGSRPRVVAHFYTKLLTLEQLTAVEMGAPRARDHGLEVLGLVRVPLYTLRDGVGGLPAFLENTFIGNAREQLLEAVQNLGLLEPGSFARLKISTPP.

A Nudix hydrolase domain is found at 18-168; that stretch reads GWRHACHALL…LENTFIGNAR (151 aa). His-24, Arg-50, and Phe-57 together coordinate substrate. Residues Gly-59, Glu-76, Glu-80, and His-99 each contribute to the Mn(2+) site. Positions 61-82 match the Nudix box motif; the sequence is FVDLRDGSLEDGLNRELGEELG. 2 residues coordinate substrate: Asn-166 and Gln-170. Glu-173 is a binding site for Mn(2+).

Belongs to the Nudix hydrolase family. NUDT16 subfamily. Homodimer. Mg(2+) serves as cofactor. It depends on Mn(2+) as a cofactor. The cofactor is Co(2+).

Its subcellular location is the nucleus. It is found in the nucleolus. It localises to the nucleoplasm. The protein localises to the cytoplasm. It catalyses the reaction a 5'-end (N(7)-methyl 5'-triphosphoguanosine)-ribonucleoside in mRNA + H2O = N(7)-methyl-GDP + a 5'-end phospho-ribonucleoside in mRNA + 2 H(+). It carries out the reaction IDP + H2O = IMP + phosphate + H(+). The catalysed reaction is dIDP + H2O = dIMP + phosphate + H(+). The enzyme catalyses a 5'-end NAD(+)-phospho-ribonucleoside in mRNA + H2O = a 5'-end phospho-ribonucleoside in mRNA + NAD(+) + H(+). It catalyses the reaction a 5'-end FAD-phospho-ribonucleoside in mRNA + H2O = a 5'-end phospho-adenosine-phospho-ribonucleoside in mRNA + FMN + 2 H(+). It carries out the reaction a 5'-end CoA-ribonucleoside in mRNA + H2O = a 5'-end phospho-adenosine-phospho-ribonucleoside in mRNA + (R)-4'-phosphopantetheine + 2 H(+). Its function is as follows. RNA-binding and decapping enzyme that catalyzes the cleavage of the cap structure of snoRNAs and mRNAs in a metal-dependent manner. Part of the U8 snoRNP complex that is required for the accumulation of mature 5.8S and 28S rRNA. Has diphosphatase activity and removes m7G and/or m227G caps from U8 snoRNA and leaves a 5'monophosphate on the RNA. Also catalyzes the cleavage of the cap structure on mRNAs. Does not hydrolyze cap analog structures like 7-methylguanosine nucleoside triphosphate (m7GpppG). Also hydrolysis m7G- and m227G U3-capped RNAs but with less efficiencies. Has broad substrate specificity with manganese or cobalt as cofactor and can act on various RNA species. Binds to the U8 snoRNA; metal is not required for RNA-binding. May play a role in the regulation of snoRNAs and mRNAs degradation. Also acts as a phosphatase; hydrolyzes the non-canonical purine nucleotides inosine diphosphate (IDP) and deoxyinosine diphosphate (dITP) as well as guanosine diphosphate (GDP), deoxyguanosine diphosphate (dGDP), xanthine diphosphate (XDP), inosine triphosphate (ITP) and deoxyinosine triphosphate (ITP) to their respective monophosphate derivatives and does not distinguish between the deoxy- and ribose forms. The order of activity with different substrates is IDP &gt; dIDP &gt;&gt; GDP = dGDP &gt; XDP = ITP = dITP. Binds strongly to GTP, ITP and XTP. Participates in the hydrolysis of dIDP/IDP and probably excludes non-canonical purines from RNA and DNA precursor pools, thus preventing their incorporation into RNA and DNA and avoiding chromosomal lesions. Exhibits decapping activity towards NAD-capped RNAs and FAD-capped RNAs. Exhibits decapping activity towards dpCoA-capped RNAs in vitro. The polypeptide is U8 snoRNA-decapping enzyme (NUDT16) (Bos taurus (Bovine)).